The following is an 834-amino-acid chain: Glycerol-3-phosphate acyltransferase (834 aa).

The short motif at 309-314 (CHRSHI) is the HXXXXD motif element.

Belongs to the GPAT/DAPAT family.

Its subcellular location is the cell inner membrane. The catalysed reaction is sn-glycerol 3-phosphate + an acyl-CoA = a 1-acyl-sn-glycero-3-phosphate + CoA. The protein operates within phospholipid metabolism; CDP-diacylglycerol biosynthesis; CDP-diacylglycerol from sn-glycerol 3-phosphate: step 1/3. In Pseudomonas aeruginosa (strain LESB58), this protein is Glycerol-3-phosphate acyltransferase.